An 890-amino-acid chain; its full sequence is Alanine--tRNA ligase (890 aa).

The Zn(2+) site is built by His-565, His-569, Cys-677, and His-681.

It belongs to the class-II aminoacyl-tRNA synthetase family. Requires Zn(2+) as cofactor.

The protein resides in the cytoplasm. It carries out the reaction tRNA(Ala) + L-alanine + ATP = L-alanyl-tRNA(Ala) + AMP + diphosphate. Its function is as follows. Catalyzes the attachment of alanine to tRNA(Ala) in a two-step reaction: alanine is first activated by ATP to form Ala-AMP and then transferred to the acceptor end of tRNA(Ala). Also edits incorrectly charged Ser-tRNA(Ala) and Gly-tRNA(Ala) via its editing domain. This chain is Alanine--tRNA ligase, found in Zymomonas mobilis subsp. mobilis (strain ATCC 31821 / ZM4 / CP4).